We begin with the raw amino-acid sequence, 477 residues long: Phosphomethylpyrimidine synthase (477 aa).

Residues asparagine 67, methionine 96, tyrosine 125, histidine 160, 180-182 (SRG), 221-224 (DGLR), and glutamate 260 contribute to the substrate site. Histidine 264 contacts Zn(2+). Tyrosine 287 contributes to the substrate binding site. Histidine 328 lines the Zn(2+) pocket. Positions 408, 411, and 416 each coordinate [4Fe-4S] cluster. Residues 427–440 (AGDGMDGLESRTDL) are compositionally biased toward basic and acidic residues. A disordered region spans residues 427–477 (AGDGMDGLESRTDLDSSAAAAVNRPPTGVHRAEKLDDIPCPVAEDDVAADD).

This sequence belongs to the ThiC family. [4Fe-4S] cluster serves as cofactor.

It catalyses the reaction 5-amino-1-(5-phospho-beta-D-ribosyl)imidazole + S-adenosyl-L-methionine = 4-amino-2-methyl-5-(phosphooxymethyl)pyrimidine + CO + 5'-deoxyadenosine + formate + L-methionine + 3 H(+). Its pathway is cofactor biosynthesis; thiamine diphosphate biosynthesis. Its function is as follows. Catalyzes the synthesis of the hydroxymethylpyrimidine phosphate (HMP-P) moiety of thiamine from aminoimidazole ribotide (AIR) in a radical S-adenosyl-L-methionine (SAM)-dependent reaction. The polypeptide is Phosphomethylpyrimidine synthase (Natronomonas pharaonis (strain ATCC 35678 / DSM 2160 / CIP 103997 / JCM 8858 / NBRC 14720 / NCIMB 2260 / Gabara) (Halobacterium pharaonis)).